The chain runs to 368 residues: Alanine racemase (368 aa).

Catalysis depends on lysine 40, which acts as the Proton acceptor; specific for D-alanine. Lysine 40 bears the N6-(pyridoxal phosphate)lysine mark. Arginine 136 contributes to the substrate binding site. Tyrosine 263 functions as the Proton acceptor; specific for L-alanine in the catalytic mechanism. Methionine 310 is a substrate binding site.

The protein belongs to the alanine racemase family. Pyridoxal 5'-phosphate serves as cofactor.

The catalysed reaction is L-alanine = D-alanine. Its pathway is amino-acid biosynthesis; D-alanine biosynthesis; D-alanine from L-alanine: step 1/1. Its function is as follows. Catalyzes the interconversion of L-alanine and D-alanine. May also act on other amino acids. In Streptococcus uberis (strain ATCC BAA-854 / 0140J), this protein is Alanine racemase (alr).